The primary structure comprises 384 residues: MAMRQAAKATIRACSSSSSSGYFARRQFNASSGDSKKIVGVFYKANEYATKNPNFLGCVENALGIRDWLESQGHQYIVTDDKEGPDCELEKHIPDLHVLISTPFHPAYVTAERIKKAKNLKLLLTAGIGSDHIDLQAAAAAGLTVAEVTGSNVVSVAEDELMRILILMRNFVPGYNQVVKGEWNVAGIAYRAYDLEGKTIGTVGAGRIGKLLLQRLKPFGCNLLYHDRLQMAPELEKETGAKFVEDLNEMLPKCDVIVINMPLTEKTRGMFNKELIGKLKKGVLIVNNARGAIMERQAVVDAVESGHIGGYSGDVWDPQPAPKDHPWRYMPNQAMTPHTSGTTIDAQLRYAAGTKDMLERYFKGEDFPTENYIVKDGELAPQYR.

Residues 1–29 (MAMRQAAKATIRACSSSSSSGYFARRQFN) constitute a chloroplast and mitochondrion transit peptide. Positions 128 and 152 each coordinate substrate. Residues 207–208 (RI), aspartate 227, 262–266 (PLTEK), asparagine 288, aspartate 314, and 338–341 (HTSG) each bind NAD(+).

The protein belongs to the D-isomer specific 2-hydroxyacid dehydrogenase family. FDH subfamily. As to quaternary structure, homodimer.

The protein localises to the mitochondrion. Its subcellular location is the plastid. It is found in the chloroplast. It carries out the reaction formate + NAD(+) = CO2 + NADH. Functionally, catalyzes the NAD(+)-dependent oxidation of formate to carbon dioxide. Involved in the cell stress response. In Arabidopsis thaliana (Mouse-ear cress), this protein is Formate dehydrogenase, chloroplastic/mitochondrial (FDH1).